Here is a 344-residue protein sequence, read N- to C-terminus: Small ribosomal subunit protein uS3 (344 aa).

Positions 38–106 (LKAALRERLK…EVFIDIQEVH (69 aa)) constitute a KH type-2 domain. The segment at 217-344 (PEPEPRREQR…QKPEGSGENQ (128 aa)) is disordered. Basic and acidic residues-rich tracts occupy residues 219 to 259 (PEPR…RGDR) and 335 to 344 (QKPEGSGENQ).

The protein belongs to the universal ribosomal protein uS3 family. In terms of assembly, part of the 30S ribosomal subunit. Forms a tight complex with proteins S10 and S14.

In terms of biological role, binds the lower part of the 30S subunit head. Binds mRNA in the 70S ribosome, positioning it for translation. The sequence is that of Small ribosomal subunit protein uS3 from Solibacter usitatus (strain Ellin6076).